The primary structure comprises 306 residues: tRNA dimethylallyltransferase (306 aa).

6 to 13 is an ATP binding site; sequence GPTASGKS. 8 to 13 lines the substrate pocket; the sequence is TASGKS.

Belongs to the IPP transferase family. As to quaternary structure, monomer. Mg(2+) is required as a cofactor.

The enzyme catalyses adenosine(37) in tRNA + dimethylallyl diphosphate = N(6)-dimethylallyladenosine(37) in tRNA + diphosphate. Functionally, catalyzes the transfer of a dimethylallyl group onto the adenine at position 37 in tRNAs that read codons beginning with uridine, leading to the formation of N6-(dimethylallyl)adenosine (i(6)A). The polypeptide is tRNA dimethylallyltransferase (Sphingopyxis alaskensis (strain DSM 13593 / LMG 18877 / RB2256) (Sphingomonas alaskensis)).